The primary structure comprises 169 residues: Peptide deformylase (169 aa).

Cys-91 and His-133 together coordinate Fe cation. Residue Glu-134 is part of the active site. Fe cation is bound at residue His-137.

It belongs to the polypeptide deformylase family. The cofactor is Fe(2+).

The catalysed reaction is N-terminal N-formyl-L-methionyl-[peptide] + H2O = N-terminal L-methionyl-[peptide] + formate. In terms of biological role, removes the formyl group from the N-terminal Met of newly synthesized proteins. Requires at least a dipeptide for an efficient rate of reaction. N-terminal L-methionine is a prerequisite for activity but the enzyme has broad specificity at other positions. The polypeptide is Peptide deformylase (Pectobacterium atrosepticum (strain SCRI 1043 / ATCC BAA-672) (Erwinia carotovora subsp. atroseptica)).